The primary structure comprises 242 residues: Ditrans,polycis-undecaprenyl-diphosphate synthase ((2E,6E)-farnesyl-diphosphate specific) (242 aa).

Asp21 is an active-site residue. Asp21 is a Mg(2+) binding site. Residues 22–25, Trp26, Arg34, His38, and 66–68 contribute to the substrate site; these read GNGR and SSE. Asn69 acts as the Proton acceptor in catalysis. Residues Trp70, Arg72, Arg189, and 195–197 each bind substrate; that span reads RIS. Glu208 is a Mg(2+) binding site.

This sequence belongs to the UPP synthase family. In terms of assembly, homodimer. Mg(2+) serves as cofactor.

The catalysed reaction is 8 isopentenyl diphosphate + (2E,6E)-farnesyl diphosphate = di-trans,octa-cis-undecaprenyl diphosphate + 8 diphosphate. Functionally, catalyzes the sequential condensation of isopentenyl diphosphate (IPP) with (2E,6E)-farnesyl diphosphate (E,E-FPP) to yield (2Z,6Z,10Z,14Z,18Z,22Z,26Z,30Z,34E,38E)-undecaprenyl diphosphate (di-trans,octa-cis-UPP). UPP is the precursor of glycosyl carrier lipid in the biosynthesis of bacterial cell wall polysaccharide components such as peptidoglycan and lipopolysaccharide. The sequence is that of Ditrans,polycis-undecaprenyl-diphosphate synthase ((2E,6E)-farnesyl-diphosphate specific) from Haemophilus ducreyi (strain 35000HP / ATCC 700724).